Here is a 702-residue protein sequence, read N- to C-terminus: Polyribonucleotide nucleotidyltransferase 3 (702 aa).

Mg(2+) is bound by residues D483 and D489. The 60-residue stretch at 550-609 folds into the KH domain; sequence PKVTQIKVHPDKVREVIGAGGKVINKIIDETGCKITIENDGTIYVAAPDQESSRRAVEMI. The region spanning 619-687 is the S1 motif domain; it reads GEVYTGKVIK…PQGKIGLSRK (69 aa).

This sequence belongs to the polyribonucleotide nucleotidyltransferase family. The cofactor is Mg(2+).

The protein localises to the cytoplasm. The enzyme catalyses RNA(n+1) + phosphate = RNA(n) + a ribonucleoside 5'-diphosphate. Involved in mRNA degradation. Catalyzes the phosphorolysis of single-stranded polyribonucleotides processively in the 3'- to 5'-direction. This Alkaliphilus metalliredigens (strain QYMF) protein is Polyribonucleotide nucleotidyltransferase 3.